The sequence spans 350 residues: Chemokine C-C motif receptor-like 2 (350 aa).

Topologically, residues 1–43 (MANYTSAPEDDYDVFIEDDLSNDERELCSPYDPQALLAQLVPY) are extracellular. Asparagine 3 carries an N-linked (GlcNAc...) asparagine glycan. Residues 44-64 (LFITVFLVGLLDNILVVLIMV) traverse the membrane as a helical segment. Residues 65 to 74 (KYKGLKQVEN) are Cytoplasmic-facing. The helical transmembrane segment at 75-95 (IYLLNLAVCNLCFLCTLPFWV) threads the bilayer. The Extracellular segment spans residues 96 to 110 (HMAWHEGDPGEPLCK). Cysteine 109 and cysteine 187 are oxidised to a cystine. Residues 111–131 (ILLVLYSVGLFSEAFFNVLLT) traverse the membrane as a helical segment. The Cytoplasmic portion of the chain corresponds to 132–149 (VQRYQKFFQMRGFFSATR). A helical membrane pass occupies residues 150 to 170 (MVAGSIFPSALVWVIAVLVML). Topologically, residues 171–204 (PELAFYKPQMENQKYKCFFGRPLFLPADETFWKH) are extracellular. The chain crosses the membrane as a helical span at residues 205 to 225 (FLTLKMNILGFLLPLFVFVFC). The Cytoplasmic segment spans residues 226–244 (YVRMRRTLKFGERGYDLFK). Residues 245-265 (LVFTIMVVFLLMWGPYNIALF) traverse the membrane as a helical segment. Residues 266–288 (LSAFNEHFSLHGCESSHNLDRST) lie on the Extracellular side of the membrane. The helical transmembrane segment at 289 to 309 (LITKIIATTHCCVNPLLYVFF) threads the bilayer. Residues 310–350 (DEAFRKHLYHFCHLCNDTAPQPTEEPAQGTSREEPCLSTKM) are Cytoplasmic-facing. Residues 329–350 (PQPTEEPAQGTSREEPCLSTKM) form a disordered region.

It belongs to the G-protein coupled receptor 1 family.

It localises to the cell membrane. Functionally, receptor for CCL19 and chemerin/RARRES2. Does not appear to be a signaling receptor, but may have a role in modulating chemokine-triggered immune responses by capturing and internalizing CCL19 or by presenting RARRES2 ligand to CMKLR1, a functional signaling receptor. Plays a critical role for the development of Th2 responses. The polypeptide is Chemokine C-C motif receptor-like 2 (CCRL2) (Sus scrofa (Pig)).